Reading from the N-terminus, the 83-residue chain is Small ribosomal subunit protein eS27 (83 aa).

Residues 37-59 (CPGCFNITTVFSHAQTVVICGSC) form a C4-type zinc finger.

Belongs to the eukaryotic ribosomal protein eS27 family. Component of the small ribosomal subunit (SSU). Mature yeast ribosomes consist of a small (40S) and a large (60S) subunit. The 40S small subunit contains 1 molecule of ribosomal RNA (18S rRNA) and at least 33 different proteins. The large 60S subunit contains 3 rRNA molecules (25S, 5.8S and 5S rRNA) and at least 46 different proteins. Zn(2+) is required as a cofactor.

Its subcellular location is the cytoplasm. In terms of biological role, component of the ribosome, a large ribonucleoprotein complex responsible for the synthesis of proteins in the cell. The small ribosomal subunit (SSU) binds messenger RNAs (mRNAs) and translates the encoded message by selecting cognate aminoacyl-transfer RNA (tRNA) molecules. The large subunit (LSU) contains the ribosomal catalytic site termed the peptidyl transferase center (PTC), which catalyzes the formation of peptide bonds, thereby polymerizing the amino acids delivered by tRNAs into a polypeptide chain. The nascent polypeptides leave the ribosome through a tunnel in the LSU and interact with protein factors that function in enzymatic processing, targeting, and the membrane insertion of nascent chains at the exit of the ribosomal tunnel. This is Small ribosomal subunit protein eS27 (rps27) from Schizosaccharomyces pombe (strain 972 / ATCC 24843) (Fission yeast).